The sequence spans 105 residues: Heat shock protein HspQ (105 aa).

The segment at 80-105 (AHPEQPSLDELAASIRHQLQAPHLRN) is disordered.

This sequence belongs to the HspQ family.

Its subcellular location is the cytoplasm. Its function is as follows. Involved in the degradation of certain denaturated proteins, including DnaA, during heat shock stress. The chain is Heat shock protein HspQ from Yersinia pseudotuberculosis serotype O:1b (strain IP 31758).